We begin with the raw amino-acid sequence, 904 residues long: MLRRSPARVVAYQLLPFLYTRSFSEASRTLRRELRGGNGRIRPELLERVSRLLVLGRYEALHDLSLDFSDELLNSILRRLRLNPEACLEIFNLASKQQKFRPDYKAYCKMVHILSRARNYQQTKSYLCELVALNHSGFVVWGELVRVFKEFSFSPTVFDMILKVYAEKGLVKNALHVFDNMGNYGRIPSLLSCNSLLSNLVRKGENFVALHVYDQMISFEVSPDVFTCSIVVNAYCRSGNVDKAMVFAKETESSLGLELNVVTYNSLINGYAMIGDVEGMTRVLRLMSERGVSRNVVTYTSLIKGYCKKGLMEEAEHVFELLKEKKLVADQHMYGVLMDGYCRTGQIRDAVRVHDNMIEIGVRTNTTICNSLINGYCKSGQLVEAEQIFSRMNDWSLKPDHHTYNTLVDGYCRAGYVDEALKLCDQMCQKEVVPTVMTYNILLKGYSRIGAFHDVLSLWKMMLKRGVNADEISCSTLLEALFKLGDFNEAMKLWENVLARGLLTDTITLNVMISGLCKMEKVNEAKEILDNVNIFRCKPAVQTYQALSHGYYKVGNLKEAFAVKEYMERKGIFPTIEMYNTLISGAFKYRHLNKVADLVIELRARGLTPTVATYGALITGWCNIGMIDKAYATCFEMIEKGITLNVNICSKIANSLFRLDKIDEACLLLQKIVDFDLLLPGYQSLKEFLEASATTCLKTQKIAESVENSTPKKLLVPNNIVYNVAIAGLCKAGKLEDARKLFSDLLSSDRFIPDEYTYTILIHGCAIAGDINKAFTLRDEMALKGIIPNIVTYNALIKGLCKLGNVDRAQRLLHKLPQKGITPNAITYNTLIDGLVKSGNVAEAMRLKEKMIEKGLVRGSDKQGDVDIPKEVVLDPEVKLGSTGVIEMNSNELYDVRRVSEAVV.

PPR repeat units lie at residues Ser154–Pro188, Ser189–Pro223, Asp224–Ser254, Asn260–Arg294, Asn295–Ala329, Asp330–Thr364, Asn365–Pro399, Asp400–Pro434, Thr435–Ala469, Asp470–Thr504, Asp505–Pro539, Ala540–Pro574, Thr575–Pro609, Thr610–Leu644, Asn645–Leu679, Asn718–Pro753, Asp754–Pro788, Asn789–Pro823, and Asn824–Arg858.

The protein belongs to the PPR family. P subfamily.

The sequence is that of Putative pentatricopeptide repeat-containing protein At1g19290 from Arabidopsis thaliana (Mouse-ear cress).